A 1069-amino-acid chain; its full sequence is DNA annealing helicase and endonuclease ZRANB3 (1069 aa).

The Helicase ATP-binding domain maps to 46-208 (VFALRRDGRC…FMQIEALFPQ (163 aa)). The segment at 46–481 (VFALRRDGRC…GRKEKLQATE (436 aa)) is DNA annealing helicase activity. 59 to 66 (DEMGLGKT) contributes to the ATP binding site. The DEAH box signature appears at 157–160 (DESH). Positions 325–485 (AVKDYIKMLL…KLQATEDDKE (161 aa)) constitute a Helicase C-terminal domain. The PIP-box signature appears at 518–525 (QHDIRSFF). A RanBP2-type zinc finger spans residues 617–646 (PEKGWQCGFCTFLNNPGLPYCEMCENPRSR). A disordered region spans residues 648 to 720 (AGRNHLQDNN…PEIGQLNNSG (73 aa)). Basic and acidic residues-rich tracts occupy residues 652-661 (HLQDNNKNDE) and 677-707 (ECER…EDRL). The 41-residue stretch at 1001 to 1041 (PGEGHFWQVDHIRPVYEGGGQCSLDNLQTLCTVCHKERTAQ) folds into the HNH domain. Positions 1001-1069 (PGEGHFWQVD…SDITRFLVKK (69 aa)) are endonuclease activity. Residues 1064–1068 (RFLVK) carry the APIM motif motif.

The protein belongs to the SNF2/RAD54 helicase family. In terms of assembly, interacts (via PIP-box and RanBP2-type zinc finger) with PCNA (when PCNA is polyubiquitinated via 'Lys-63'-linked polyubiquitin).

It localises to the nucleus. The protein localises to the chromosome. Functionally, DNA annealing helicase and endonuclease required to maintain genome stability at stalled or collapsed replication forks by facilitating fork restart and limiting inappropriate recombination that could occur during template switching events. Recruited to the sites of stalled DNA replication by polyubiquitinated PCNA and acts as a structure-specific endonuclease that cleaves the replication fork D-loop intermediate, generating an accessible 3'-OH group in the template of the leading strand, which is amenable to extension by DNA polymerase. In addition to endonuclease activity, also catalyzes the fork regression via annealing helicase activity in order to prevent disintegration of the replication fork and the formation of double-strand breaks. This chain is DNA annealing helicase and endonuclease ZRANB3 (Zranb3), found in Mus musculus (Mouse).